The chain runs to 122 residues: UPF0102 protein XAC0764 (122 aa).

Belongs to the UPF0102 family.

The polypeptide is UPF0102 protein XAC0764 (Xanthomonas axonopodis pv. citri (strain 306)).